We begin with the raw amino-acid sequence, 177 residues long: Adenine phosphoribosyltransferase (177 aa).

Belongs to the purine/pyrimidine phosphoribosyltransferase family. In terms of assembly, homodimer.

It is found in the cytoplasm. It catalyses the reaction AMP + diphosphate = 5-phospho-alpha-D-ribose 1-diphosphate + adenine. It functions in the pathway purine metabolism; AMP biosynthesis via salvage pathway; AMP from adenine: step 1/1. Catalyzes a salvage reaction resulting in the formation of AMP, that is energically less costly than de novo synthesis. The sequence is that of Adenine phosphoribosyltransferase from Chlorobium phaeobacteroides (strain BS1).